The chain runs to 232 residues: MNNAINSPVIVALDNMTKNASLALADQLDPALCRLKVGKELYTRCGPEIVKALHQRQFEVFLDLKFHDIPNTTAQAVLAAAELGIWMVNVHASAGLEAMALAKQRLLDSDFDTLLIAVTVLTSMDNEALMQTGITDGLDAQVSRLAQLTKQAGLDGVVCSAQEAKTLKALCGQDFKLITPGIRLLDDNADDQKRICTPKQALNDGSDYLVIGRSITQAADPAAKLQLILQSL.

Residues D14, K36, D63–T72, T122, R183, Q192, G212, and R213 contribute to the substrate site. The active-site Proton donor is K65.

It belongs to the OMP decarboxylase family. Type 1 subfamily. Homodimer.

It carries out the reaction orotidine 5'-phosphate + H(+) = UMP + CO2. It participates in pyrimidine metabolism; UMP biosynthesis via de novo pathway; UMP from orotate: step 2/2. In terms of biological role, catalyzes the decarboxylation of orotidine 5'-monophosphate (OMP) to uridine 5'-monophosphate (UMP). The polypeptide is Orotidine 5'-phosphate decarboxylase (Psychrobacter arcticus (strain DSM 17307 / VKM B-2377 / 273-4)).